Reading from the N-terminus, the 296-residue chain is GTPase Era (296 aa).

The region spanning Lys-3 to Glu-170 is the Era-type G domain. A G1 region spans residues Gly-11 to Ser-18. Gly-11 to Ser-18 provides a ligand contact to GTP. The segment at Gln-37–Asn-41 is G2. Residues Asp-58–Gly-61 form a G3 region. GTP is bound by residues Asp-58–Ile-62 and Asn-120–Asp-123. The segment at Asn-120–Asp-123 is G4. The tract at residues Ile-149 to Ala-151 is G5. A KH type-2 domain is found at Leu-201–Lys-278.

The protein belongs to the TRAFAC class TrmE-Era-EngA-EngB-Septin-like GTPase superfamily. Era GTPase family. As to quaternary structure, monomer.

The protein resides in the cytoplasm. It localises to the cell membrane. Functionally, an essential GTPase that binds both GDP and GTP, with rapid nucleotide exchange. Plays a role in 16S rRNA processing and 30S ribosomal subunit biogenesis and possibly also in cell cycle regulation and energy metabolism. The sequence is that of GTPase Era from Clostridium perfringens (strain ATCC 13124 / DSM 756 / JCM 1290 / NCIMB 6125 / NCTC 8237 / Type A).